The chain runs to 493 residues: Protein dml1 (493 aa).

The protein belongs to the misato family.

It is found in the mitochondrion. Functionally, involved in the partitioning of the mitochondrial organelle and mitochondrial DNA (mtDNA) inheritance. This Aspergillus oryzae (strain ATCC 42149 / RIB 40) (Yellow koji mold) protein is Protein dml1 (dml1).